Reading from the N-terminus, the 132-residue chain is Ig kappa chain V-III region MOPC 321 (132 aa).

The first 20 residues, 1 to 20 (METDTLLLWVLLLWVPGSTG), serve as a signal peptide directing secretion. Residues 21 to 43 (DIVLTQSPASLAVSLGQRATISC) form a framework-1 region. C43 and C112 are disulfide-bonded. The segment at 44-58 (RASKSVNTYGNSFMZ) is complementarity-determining-1. The framework-2 stretch occupies residues 59 to 73 (WYZZKPGZPPKLLIY). The complementarity-determining-2 stretch occupies residues 74–80 (RASNLZS). A framework-3 region spans residues 81–112 (GIPARFSGSGSRTBFTLTIBPVZABDVATYFC). The tract at residues 113–121 (ZZSBZBPWT) is complementarity-determining-3. The segment at 122–131 (FGSGTKLEIK) is framework-4.

The protein is Ig kappa chain V-III region MOPC 321 of Mus musculus (Mouse).